The sequence spans 384 residues: tRNA-specific 2-thiouridylase MnmA (384 aa).

ATP contacts are provided by residues 9–16 and Met-35; that span reads GMSGGVDS. Residues 95 to 97 form an interaction with target base in tRNA region; the sequence is NPD. Cys-100 acts as the Nucleophile in catalysis. A disulfide bridge links Cys-100 with Cys-196. Gly-124 contributes to the ATP binding site. The segment at 146 to 148 is interaction with tRNA; it reads KDQ. The active-site Cysteine persulfide intermediate is Cys-196. Positions 308–309 are interaction with tRNA; sequence RY.

The protein belongs to the MnmA/TRMU family.

Its subcellular location is the cytoplasm. The catalysed reaction is S-sulfanyl-L-cysteinyl-[protein] + uridine(34) in tRNA + AH2 + ATP = 2-thiouridine(34) in tRNA + L-cysteinyl-[protein] + A + AMP + diphosphate + H(+). Its function is as follows. Catalyzes the 2-thiolation of uridine at the wobble position (U34) of tRNA, leading to the formation of s(2)U34. The sequence is that of tRNA-specific 2-thiouridylase MnmA from Burkholderia vietnamiensis (strain G4 / LMG 22486) (Burkholderia cepacia (strain R1808)).